We begin with the raw amino-acid sequence, 184 residues long: MNEQADMILLEIEEKMEKSLEALGREYAAVRTGRANPNILDRIMVSYYGVDTPLKQVASISVPEAQQLYIKPFDKSILKDIETAINTSSLELPPRNDGTGIRLTLPALTGERRRSLVKDVEKMAEAGKVAIRHIRRDGNEHLKKLGLTEDDEKGYLEDVQALTDAYVKKVDELTKEKSEELLDV.

The protein belongs to the RRF family.

It localises to the cytoplasm. Functionally, responsible for the release of ribosomes from messenger RNA at the termination of protein biosynthesis. May increase the efficiency of translation by recycling ribosomes from one round of translation to another. This Acholeplasma laidlawii (strain PG-8A) protein is Ribosome-recycling factor.